We begin with the raw amino-acid sequence, 446 residues long: Elongation factor 1-alpha (446 aa).

The 226-residue stretch at Lys5 to Lys230 folds into the tr-type G domain. The tract at residues Gly14–Ser21 is G1. Residue Gly14–Ser21 coordinates GTP. Residues Gly70–Asp74 are G2. Residues Asp91–Gly94 are G3. Residues Asp91–His95 and Asn153–Asp156 contribute to the GTP site. The tract at residues Asn153–Asp156 is G4. Positions Ser194–Trp196 are G5.

It belongs to the TRAFAC class translation factor GTPase superfamily. Classic translation factor GTPase family. EF-Tu/EF-1A subfamily.

The protein resides in the cytoplasm. Functionally, this protein promotes the GTP-dependent binding of aminoacyl-tRNA to the A-site of ribosomes during protein biosynthesis. The polypeptide is Elongation factor 1-alpha (EFAA) (Stylonychia lemnae (Ciliate)).